A 524-amino-acid chain; its full sequence is MLTCNKAGSRMVVDAASSNGPFQPVALLHIRDVPPADQEKLFIQKLRQCCVLFDFVSDPLSDLKWKEVKRAALSEMVEYITHNRNVITEPIYPEVVHMFAVNMFRTLPPSSNPTGAEFDPEEDEPTLEAAWPHLQLVYEFFLRFLESPDFQPNIAKKYIDQKFVLQLLELFDSEDPRERDFLKTTLHRIYGKFLGLRAYIRKQINNIFYRFIYETEHHNGIAELLEILGSIINGFALPLKEEHKIFLLKVLLPLHKVKSLSVYHPQLAYCVVQFLEKDSTLTEPVVMALLKYWPKTHSPKEVMFLNELEEILDVIEPSEFVKIMEPLFRQLAKCVSSPHFQVAERALYYWNNEYIMSLISDNAAKILPIMFPSLYRNSKTHWNKTIHGLIYNALKLFMEMNQKLFDDCTQQFKAEKLKEKLKMKEREEAWVKIENLAKANPQYSLCSHASTVSMPLAMETDGPLFEDVQMLRKTVSDEARQAQKDPKKERPLARRKSELPQDPHTKKALEAHCRADELVPQDGR.

Position 1 is an N-acetylmethionine (Met-1). Residues 472 to 489 (RKTVSDEARQAQKDPKKE) carry the Nuclear localization signal motif. The interval 476 to 524 (SDEARQAQKDPKKERPLARRKSELPQDPHTKKALEAHCRADELVPQDGR) is disordered.

It belongs to the phosphatase 2A regulatory subunit B56 family. In terms of assembly, PP2A consists of a common heterodimeric core enzyme, composed of PPP2CA a 36 kDa catalytic subunit (subunit C) and PPP2R1A a 65 kDa constant regulatory subunit (PR65 or subunit A), that associates with a variety of regulatory subunits. Proteins that associate with the core dimer include three families of regulatory subunits B (the R2/B/PR55/B55, R3/B''/PR72/PR130/PR59 and R5/B'/B56 families), the 48 kDa variable regulatory subunit, viral proteins, and cell signaling molecules. Interacts with SGO1. Interacts with SGO1; the interaction is direct. May interact with TP53. Interacts with IER3 and/or ERK kinases; regulates ERK dephosphorylation Interacts with CIP2A; this interaction stabilizes CIP2A. Highly expressed in testis, heart and spleen. Also found in brain and skeletal muscle.

The protein localises to the nucleus. It localises to the chromosome. It is found in the centromere. In terms of biological role, the B regulatory subunit might modulate substrate selectivity and catalytic activity, and might also direct the localization of the catalytic enzyme to a particular subcellular compartment. The PP2A-PPP2R5C holoenzyme may activate TP53 and play a role in DNA damage-induced inhibition of cell proliferation. PP2A-PPP2R5C may also regulate the ERK signaling pathway through ERK dephosphorylation. The sequence is that of Serine/threonine-protein phosphatase 2A 56 kDa regulatory subunit gamma isoform (PPP2R5C) from Oryctolagus cuniculus (Rabbit).